The primary structure comprises 253 residues: NAD-dependent protein deacylase 2 (253 aa).

A Deacetylase sirtuin-type domain is found at 1–252; sequence MEDEIRKAAE…VEEVKRLRSE (252 aa). Residues 23 to 42 and 100 to 103 each bind NAD(+); these read GAGI…DGLW and QNID. His118 serves as the catalytic Proton acceptor. Cys126, Cys129, Cys150, and Cys153 together coordinate Zn(2+). Residues 191–193, 217–219, and Ala235 contribute to the NAD(+) site; these read GSS and NAE.

It belongs to the sirtuin family. Class III subfamily. Zn(2+) is required as a cofactor.

Its subcellular location is the cytoplasm. The enzyme catalyses N(6)-acetyl-L-lysyl-[protein] + NAD(+) + H2O = 2''-O-acetyl-ADP-D-ribose + nicotinamide + L-lysyl-[protein]. Functionally, NAD-dependent protein deacetylase which modulates the activities of several proteins which are inactive in their acetylated form. Deacetylates the N-terminal lysine residue of Alba, the major archaeal chromatin protein and that, in turn, increases Alba's DNA binding affinity, thereby repressing transcription. This chain is NAD-dependent protein deacylase 2, found in Archaeoglobus fulgidus (strain ATCC 49558 / DSM 4304 / JCM 9628 / NBRC 100126 / VC-16).